The primary structure comprises 280 residues: Polyamine aminopropyltransferase 1 (280 aa).

A PABS domain is found at D3–K237. Residue Q33 coordinates S-methyl-5'-thioadenosine. Positions 64 and 88 each coordinate spermidine. Residues D108 and D139 to G140 each bind S-methyl-5'-thioadenosine. The Proton acceptor role is filled by D157. D157–D160 contacts spermidine.

The protein belongs to the spermidine/spermine synthase family. As to quaternary structure, homodimer or homotetramer.

The protein resides in the cytoplasm. It carries out the reaction S-adenosyl 3-(methylsulfanyl)propylamine + putrescine = S-methyl-5'-thioadenosine + spermidine + H(+). Its pathway is amine and polyamine biosynthesis; spermidine biosynthesis; spermidine from putrescine: step 1/1. Functionally, catalyzes the irreversible transfer of a propylamine group from the amino donor S-adenosylmethioninamine (decarboxy-AdoMet) to putrescine (1,4-diaminobutane) to yield spermidine. This is Polyamine aminopropyltransferase 1 from Aquifex aeolicus (strain VF5).